We begin with the raw amino-acid sequence, 803 residues long: Elongation factor G, mitochondrial (803 aa).

Residues 1 to 24 (MVRPAQVRAFSGLARSATSTRLIP) constitute a mitochondrion transit peptide. A tr-type G domain is found at 102 to 388 (SKVRNIGIAA…GVCDYLPNPS (287 aa)). GTP-binding positions include 111 to 118 (AHIDSGKT), 186 to 190 (DTPGH), and 240 to 243 (NKMD).

It belongs to the TRAFAC class translation factor GTPase superfamily. Classic translation factor GTPase family. EF-G/EF-2 subfamily.

The protein resides in the mitochondrion. It functions in the pathway protein biosynthesis; polypeptide chain elongation. Its function is as follows. Mitochondrial GTPase that catalyzes the GTP-dependent ribosomal translocation step during translation elongation. During this step, the ribosome changes from the pre-translocational (PRE) to the post-translocational (POST) state as the newly formed A-site-bound peptidyl-tRNA and P-site-bound deacylated tRNA move to the P and E sites, respectively. Catalyzes the coordinated movement of the two tRNA molecules, the mRNA and conformational changes in the ribosome. This chain is Elongation factor G, mitochondrial (mef1), found in Talaromyces marneffei (strain ATCC 18224 / CBS 334.59 / QM 7333) (Penicillium marneffei).